Here is a 321-residue protein sequence, read N- to C-terminus: Tyrosine recombinase XerC (321 aa).

Residues 16–107 (PSIAQEMTRW…GLRSFGRFLE (92 aa)) form the Core-binding (CB) domain. Residues 128-315 (SLPKPLPMAS…DSERLLEVYA (188 aa)) form the Tyr recombinase domain. Catalysis depends on residues arginine 173, lysine 199, histidine 267, arginine 270, and histidine 293. Tyrosine 302 serves as the catalytic O-(3'-phospho-DNA)-tyrosine intermediate.

It belongs to the 'phage' integrase family. XerC subfamily. Forms a cyclic heterotetrameric complex composed of two molecules of XerC and two molecules of XerD.

The protein resides in the cytoplasm. In terms of biological role, site-specific tyrosine recombinase, which acts by catalyzing the cutting and rejoining of the recombining DNA molecules. The XerC-XerD complex is essential to convert dimers of the bacterial chromosome into monomers to permit their segregation at cell division. It also contributes to the segregational stability of plasmids. The chain is Tyrosine recombinase XerC from Bradyrhizobium diazoefficiens (strain JCM 10833 / BCRC 13528 / IAM 13628 / NBRC 14792 / USDA 110).